The chain runs to 751 residues: Proton-associated sugar transporter A (751 aa).

The next 6 membrane-spanning stretches (helical) occupy residues isoleucine 93–leucine 113, serine 123–tryptophan 143, arginine 155–glycine 175, tryptophan 191–aspartate 211, isoleucine 233–tryptophan 253, and valine 268–isoleucine 288. Threonine 500 is modified (phosphothreonine). Helical transmembrane passes span glycine 536–phenylalanine 556, valine 576–isoleucine 596, valine 606–leucine 626, leucine 630–leucine 650, phenylalanine 688–alanine 708, and glycine 710–valine 730.

It belongs to the glycoside-pentoside-hexuronide (GPH) cation symporter transporter (TC 2.A.2) family.

Its subcellular location is the membrane. The catalysed reaction is D-galactose(in) + H(+)(in) = D-galactose(out) + H(+)(out). It catalyses the reaction D-glucose(out) + H(+)(out) = D-glucose(in) + H(+)(in). Its function is as follows. Proton-associated glucose transporter in the brain. In Mus musculus (Mouse), this protein is Proton-associated sugar transporter A.